Reading from the N-terminus, the 153-residue chain is ORM1-like protein 1 (153 aa).

At 1–26 (MNVGVAHSEVNPNTRVMNSRGMWLTY) the chain is on the cytoplasmic side. The next 2 membrane-spanning stretches (helical) occupy residues 27-46 (ALGV…FSVP) and 47-64 (VAWT…YVFL). Residues 65 to 100 (HAVKGTPFETPDQGKARLLTHWEQLDYGVQFTSSRK) are Cytoplasmic-facing. A helical transmembrane segment spans residues 101 to 121 (FFTISPIILYFLASFYTKYDP). Residues 122-123 (TH) lie on the Extracellular side of the membrane. A helical transmembrane segment spans residues 124-140 (FILNTASLLSVLIPKMP). Residues 141–153 (QLHGVRIFGINKY) lie on the Cytoplasmic side of the membrane.

It belongs to the ORM family. In terms of assembly, ceramide-sensitive subunit of the serine palmitoyltransferase (SPT) complex, which is also composed of SPTLC1, SPTLC2/3 and SPTSSA/B. In terms of tissue distribution, widely expressed. Expressed in adult and fetal heart, brain, lung, liver, skeletal muscle and kidney. Expressed in adult pancreas and placenta and in fetal spleen abd thymus. Expressed at intermediate level in pancreas, placenta and brain but low in skeletal muscle and lung.

It localises to the endoplasmic reticulum membrane. Its function is as follows. Plays an essential role in the homeostatic regulation of sphingolipid de novo biosynthesis by modulating the activity of the serine palmitoyltransferase (SPT) in response to ceramide levels. When complexed to SPT, the binding of ceramides to its N-terminus stabilizes a conformation that block SPT substrate entry, hence preventing SPT catalytic activity. Through this mechanism, maintains ceramide levels at sufficient concentrations for the production of complex sphingolipids, but which prevents the accumulation of ceramides to levels that trigger apoptosis. This Homo sapiens (Human) protein is ORM1-like protein 1 (ORMDL1).